Reading from the N-terminus, the 276-residue chain is Undecaprenyl-diphosphatase (276 aa).

8 helical membrane passes run 1–21 (MHWL…FLPV), 41–61 (LLLD…VFFA), 97–117 (ALLI…FHKI), 121–141 (LFAS…LLWA), 155–175 (VTWG…LPGI), 200–220 (FLLS…DASA), 231–251 (LGGI…LAIV), and 256–276 (LWWF…ANFV).

Belongs to the UppP family.

It is found in the cell inner membrane. It carries out the reaction di-trans,octa-cis-undecaprenyl diphosphate + H2O = di-trans,octa-cis-undecaprenyl phosphate + phosphate + H(+). Its function is as follows. Catalyzes the dephosphorylation of undecaprenyl diphosphate (UPP). Confers resistance to bacitracin. This is Undecaprenyl-diphosphatase from Desulfatibacillum aliphaticivorans.